The following is a 292-amino-acid chain: 33 kDa chaperonin (292 aa).

2 disulfide bridges follow: Cys230–Cys232 and Cys263–Cys266.

It belongs to the HSP33 family. In terms of processing, under oxidizing conditions two disulfide bonds are formed involving the reactive cysteines. Under reducing conditions zinc is bound to the reactive cysteines and the protein is inactive.

The protein localises to the cytoplasm. Redox regulated molecular chaperone. Protects both thermally unfolding and oxidatively damaged proteins from irreversible aggregation. Plays an important role in the bacterial defense system toward oxidative stress. This is 33 kDa chaperonin from Escherichia coli O7:K1 (strain IAI39 / ExPEC).